Consider the following 424-residue polypeptide: MATPVSYSFVQRMVVNELEFLNANVNSNGVGYFSFNHLGDRLQSLLTTLNNVAANADPYLQKCDARSLKLLLDNLNKISFTHNVESKPQLKQRLLDMLPNGDAIGNKYDKELNKILNFTYNCRLDTLNNIEMTHMKLTCVLCYTAGLPFRDNLWYLPNNESGELFATAFGNYLAYFLAMMRSKDGSLDKNVRVMYHVVPPLQLSEPPYIVFRDRINAGLISVQDSAQYQTAGLDFEVCYTLNNKLYLNSPGSQQTELCAEYLELNALPYCLYNATLPDNFALSALNLYKLNDAKKKLKLGNVLFVNTMRTGAKETIIATMRAYYYACKYAKANKLLRVIGNYKGYANDYKLAALDFAILMLVTNSTNIQLKYLTMNVHERMFMELKQQVCRLSPRKIYNVLLNYDIGSEPLTNFSRDAADGAFD.

This is an uncharacterized protein from Orgyia pseudotsugata (Douglas-fir tussock moth).